Here is a 468-residue protein sequence, read N- to C-terminus: Acetyl-CoA decarbonylase/synthase complex subunit gamma 1 (468 aa).

Residues 1 to 61 enclose the 4Fe-4S domain; sequence MKINSPLEAY…YAKKLAELDR (61 aa). Residues Cys-18, Cys-21, Cys-26, and Cys-43 each contribute to the [4Fe-4S] cluster site.

As to quaternary structure, heterodimer of delta and gamma chains. The ACDS complex is made up of alpha, epsilon, beta, gamma and delta chains with a probable stoichiometry of (alpha(2)epsilon(2))(4)-beta(8)-(gamma(1)delta(1))(8). Requires corrinoid as cofactor. The cofactor is [4Fe-4S] cluster.

The enzyme catalyses 5,6,7,8-tetrahydrosarcinapterin + methyl-Co(III)-[corrinoid Fe-S protein] = 5-methyltetrahydrosarcinapterin + Co(I)-[corrinoid Fe-S protein] + H(+). Its pathway is one-carbon metabolism; methanogenesis from acetate. Part of a complex that catalyzes the reversible cleavage of acetyl-CoA, allowing growth on acetate as sole source of carbon and energy. This is Acetyl-CoA decarbonylase/synthase complex subunit gamma 1 from Methanosarcina thermophila.